The primary structure comprises 320 residues: Malate dehydrogenase (320 aa).

Residues 10–15 (GSGMIG) and Asp-34 contribute to the NAD(+) site. Substrate-binding residues include Arg-83 and Arg-89. NAD(+) is bound by residues Asn-96 and 119-121 (ITN). Residues Asn-121 and Arg-152 each coordinate substrate. His-176 acts as the Proton acceptor in catalysis.

Belongs to the LDH/MDH superfamily. MDH type 3 family.

It catalyses the reaction (S)-malate + NAD(+) = oxaloacetate + NADH + H(+). Functionally, catalyzes the reversible oxidation of malate to oxaloacetate. This chain is Malate dehydrogenase, found in Brucella melitensis biotype 2 (strain ATCC 23457).